A 671-amino-acid polypeptide reads, in one-letter code: DNA polymerase kappa (671 aa).

The UmuC domain occupies Trp-105–Gly-285. Positions 109 and 200 each coordinate Mg(2+). Glu-201 is a catalytic residue. The segment at Tyr-576–Glu-613 adopts a UBZ3-type zinc-finger fold. Zn(2+) is bound by residues Cys-583, Cys-586, His-601, and His-605. The segment at Ala-607–Lys-671 is disordered. The short motif at Lys-625–Glu-632 is the Nuclear localization signal element. The segment covering Leu-629–Lys-650 has biased composition (basic and acidic residues). Over residues Thr-659–Lys-671 the composition is skewed to polar residues.

This sequence belongs to the DNA polymerase type-Y family. Mg(2+) serves as cofactor. Expressed in roots, leaves, stems, flowers and siliques. Present in endoreduplicating cells.

The protein localises to the nucleus. The enzyme catalyses DNA(n) + a 2'-deoxyribonucleoside 5'-triphosphate = DNA(n+1) + diphosphate. With respect to regulation, unable to bypass a single 1,N(6)-ethenoadenine (epsilon-dA) or an abasic site lesions in DNA templates. Functionally, template-directed low-fidelity DNA polymerase specifically involved in DNA repair. Able to extend primer-terminal mispairs, and to insert nucleotides opposite to a single 7,8-dihydro-8-oxoGuanine (8-oxoG) lesion and moderately extend from the resulting primer end, thus leading to both error-free and error-prone bypass of 8-oxoG DNA lesions. Probably involved in consecutive DNA replication cycles in the absence of mitosis. Binds preferentially template-primer DNA substrates or single-stranded DNA. Plays an important role in translesion synthesis, where the normal high-fidelity DNA polymerases cannot proceed and DNA synthesis stalls. Depending on the context, it inserts the correct base, but causes frequent base transitions, transversions and frameshifts. The chain is DNA polymerase kappa from Arabidopsis thaliana (Mouse-ear cress).